The sequence spans 83 residues: Small ribosomal subunit protein bS18 (83 aa).

The protein belongs to the bacterial ribosomal protein bS18 family. In terms of assembly, part of the 30S ribosomal subunit. Forms a tight heterodimer with protein bS6.

Functionally, binds as a heterodimer with protein bS6 to the central domain of the 16S rRNA, where it helps stabilize the platform of the 30S subunit. The protein is Small ribosomal subunit protein bS18 of Desulfosudis oleivorans (strain DSM 6200 / JCM 39069 / Hxd3) (Desulfococcus oleovorans).